Reading from the N-terminus, the 818-residue chain is Cytosolic phospholipase A2 delta (818 aa).

A C2 domain is found at 5–124; the sequence is SPGGPPGHPY…LPGKLLRKTF (120 aa). Positions 38, 44, 94, 96, and 102 each coordinate Ca(2+). In terms of domain architecture, PLA2c spans 273 to 818; that stretch reads GCPEELAVHL…LEARPPRAQT (546 aa). 330 to 331 is a substrate binding site; that stretch reads GG. Ser361 acts as the Nucleophile in catalysis. Residue Asp647 is the Proton acceptor of the active site.

Requires Ca(2+) as cofactor. Expressed in stratified squamous epithelia, such as those in skin and cervix, but not in other tissues. Strongly expressed in the upper spinous layer of the psoriatic epidermis, expressed weakly and discontinuously in atopic dermatitis and mycosis fungoides, and not detected in the epidermis of normal skin.

It localises to the cytoplasm. The protein localises to the cytosol. Its subcellular location is the membrane. It catalyses the reaction a 1,2-diacyl-sn-glycero-3-phosphocholine + H2O = a 1-acyl-sn-glycero-3-phosphocholine + a fatty acid + H(+). It carries out the reaction 1-hexadecanoyl-2-(5Z,8Z,11Z,14Z-eicosatetraenoyl)-sn-glycero-3-phosphocholine + H2O = 1-hexadecanoyl-sn-glycero-3-phosphocholine + (5Z,8Z,11Z,14Z)-eicosatetraenoate + H(+). The enzyme catalyses 1-hexadecanoyl-2-(9Z,12Z-octadecadienoyl)-sn-glycero-3-phosphocholine + H2O = (9Z,12Z)-octadecadienoate + 1-hexadecanoyl-sn-glycero-3-phosphocholine + H(+). The catalysed reaction is 1-hexadecanoyl-2-(9Z-octadecenoyl)-sn-glycero-3-phosphocholine + H2O = 1-hexadecanoyl-sn-glycero-3-phosphocholine + (9Z)-octadecenoate + H(+). It catalyses the reaction 1-hexadecanoyl-2-(5Z,8Z,11Z,14Z-eicosatetraenoyl)-sn-glycero-3-phosphoethanolamine + H2O = 1-hexadecanoyl-sn-glycero-3-phosphoethanolamine + (5Z,8Z,11Z,14Z)-eicosatetraenoate + H(+). It carries out the reaction 1-hexadecanoyl-2-(9Z,12Z-octadecadienoyl)-sn-glycero-3-phosphoethanolamine + H2O = 1-hexadecanoyl-sn-glycero-3-phosphoethanolamine + (9Z,12Z)-octadecadienoate + H(+). The protein operates within lipid metabolism; fatty acid metabolism. Its activity is regulated as follows. Stimulated by cytosolic Ca(2+). Its function is as follows. Calcium-dependent phospholipase A2 that selectively hydrolyzes glycerophospholipids in the sn-2 position. Has a preference for linoleic acid at the sn-2 position. The protein is Cytosolic phospholipase A2 delta of Homo sapiens (Human).